The sequence spans 71 residues: MPKQLKEIKDFLLTARRKDAKSVRIKKNPDNVTKFKVRCSKYLYTIVVKEKEKAEKLKQSLPPGLQVKELK.

Belongs to the eukaryotic ribosomal protein eL38 family.

This is Large ribosomal subunit protein eL38 (RpL38) from Argas monolakensis (Mono lake bird tick).